We begin with the raw amino-acid sequence, 507 residues long: Dolichyl pyrophosphate Man9GlcNAc2 alpha-1,3-glucosyltransferase (507 aa).

Over 1–2 the chain is Cytoplasmic; that stretch reads ME. A helical transmembrane segment spans residues 3 to 23; that stretch reads SWPWMAVVVLLGLTVRWTVSL. Over 24-114 the chain is Lumenal; it reads SSYSGAGKPP…SQAHKLFMRA (91 aa). Asn-59 carries an N-linked (GlcNAc...) asparagine glycan. Residues 115–135 form a helical membrane-spanning segment; it reads TVLAADLLIYVPAVLLYCYSL. Topologically, residues 136-143 are cytoplasmic; the sequence is KEISPKRK. Residues 144-164 form a helical membrane-spanning segment; it reads IASALCILLYPGLILIDYGHF. Over 165–172 the chain is Lumenal; that stretch reads QYNSVSLG. Residues 173–193 traverse the membrane as a helical segment; the sequence is FALWGVLGVSWDWDLLGSLAF. Topologically, residues 194-229 are cytoplasmic; sequence CLALNYKQMELYHSLPFFCFLLGKCFKKGLKGKGLA. A helical membrane pass occupies residues 230–250; sequence LFIRIACTVLASFLLCWLPFL. Residues 251 to 297 are Lumenal-facing; it reads TEREHALQVVRRLFPVDRGLFEDKVANIWCSVNVFLKIKDTLPRHIQ. A helical membrane pass occupies residues 298–318; that stretch reads IAISFCFTLLSLLPACIKLTV. Over 319–332 the chain is Cytoplasmic; the sequence is RPSCKGFRFTLVSC. The chain crosses the membrane as a helical span at residues 333–353; it reads ALSFFLFSFQVHEKSILLVSL. Topologically, residues 354 to 361 are lumenal; it reads PVCLVLTE. A helical membrane pass occupies residues 362-382; sequence IPFMSTWFLLVSTFSMLPLLL. Topologically, residues 383–385 are cytoplasmic; sequence KDE. A helical membrane pass occupies residues 386 to 406; that stretch reads LLLPSVVTVMAFVIACGTFFP. Residues 407–437 lie on the Lumenal side of the membrane; the sequence is MLENTSEEQLQLKSFAVSVRRHLPGFTFLPR. A helical membrane pass occupies residues 438–458; it reads IMQCLFLSSVITMVLLTILSV. Residues 459–468 lie on the Cytoplasmic side of the membrane; the sequence is TLDPPQKLPD. Residues 469–489 traverse the membrane as a helical segment; that stretch reads LFPVLICFVSCVNFVFFLVYF. Residues 490–507 are Lumenal-facing; sequence NIVIMWDSKNGRNRKKIE.

The protein belongs to the ALG6/ALG8 glucosyltransferase family.

The protein resides in the endoplasmic reticulum membrane. It carries out the reaction an alpha-D-Man-(1-&gt;2)-alpha-D-Man-(1-&gt;2)-alpha-D-Man-(1-&gt;3)-[alpha-D-Man-(1-&gt;2)-alpha-D-Man-(1-&gt;3)-[alpha-D-Man-(1-&gt;2)-alpha-D-Man-(1-&gt;6)]-alpha-D-Man-(1-&gt;6)]-beta-D-Man-(1-&gt;4)-beta-D-GlcNAc-(1-&gt;4)-alpha-D-GlcNAc-diphospho-di-trans,poly-cis-dolichol + a di-trans,poly-cis-dolichyl beta-D-glucosyl phosphate = an alpha-D-Glc-(1-&gt;3)-alpha-D-Man-(1-&gt;2)-alpha-D-Man-(1-&gt;2)-alpha-D-Man-(1-&gt;3)-[alpha-D-Man-(1-&gt;2)-alpha-D-Man-(1-&gt;3)-[alpha-D-Man-(1-&gt;2)-alpha-D-Man-(1-&gt;6)]-alpha-D-Man-(1-&gt;6)]-beta-D-Man-(1-&gt;4)-beta-D-GlcNAc-(1-&gt;4)-alpha-D-GlcNAc-diphospho-di-trans,poly-cis-dolichol + a di-trans,poly-cis-dolichyl phosphate + H(+). It participates in protein modification; protein glycosylation. Functionally, dolichyl pyrophosphate Man9GlcNAc2 alpha-1,3-glucosyltransferase that operates in the biosynthetic pathway of dolichol-linked oligosaccharides, the glycan precursors employed in protein asparagine (N)-glycosylation. The assembly of dolichol-linked oligosaccharides begins on the cytosolic side of the endoplasmic reticulum membrane and finishes in its lumen. The sequential addition of sugars to dolichol pyrophosphate produces dolichol-linked oligosaccharides containing fourteen sugars, including two GlcNAcs, nine mannoses and three glucoses. Once assembled, the oligosaccharide is transferred from the lipid to nascent proteins by oligosaccharyltransferases. In the lumen of the endoplasmic reticulum, adds the first glucose residue from dolichyl phosphate glucose (Dol-P-Glc) onto the lipid-linked oligosaccharide intermediate Man(9)GlcNAc(2)-PP-Dol to produce Glc(1)Man(9)GlcNAc(2)-PP-Dol. Glc(1)Man(9)GlcNAc(2)-PP-Dol is a substrate for ALG8, the following enzyme in the biosynthetic pathway. This Mus musculus (Mouse) protein is Dolichyl pyrophosphate Man9GlcNAc2 alpha-1,3-glucosyltransferase.